A 326-amino-acid chain; its full sequence is Lipoyl synthase (326 aa).

Positions 68, 73, 79, 94, 98, 101, and 308 each coordinate [4Fe-4S] cluster. One can recognise a Radical SAM core domain in the interval 80–297 (FNHGTATFMI…KDVAMGLGFS (218 aa)).

Belongs to the radical SAM superfamily. Lipoyl synthase family. Requires [4Fe-4S] cluster as cofactor.

Its subcellular location is the cytoplasm. The catalysed reaction is [[Fe-S] cluster scaffold protein carrying a second [4Fe-4S](2+) cluster] + N(6)-octanoyl-L-lysyl-[protein] + 2 oxidized [2Fe-2S]-[ferredoxin] + 2 S-adenosyl-L-methionine + 4 H(+) = [[Fe-S] cluster scaffold protein] + N(6)-[(R)-dihydrolipoyl]-L-lysyl-[protein] + 4 Fe(3+) + 2 hydrogen sulfide + 2 5'-deoxyadenosine + 2 L-methionine + 2 reduced [2Fe-2S]-[ferredoxin]. It participates in protein modification; protein lipoylation via endogenous pathway; protein N(6)-(lipoyl)lysine from octanoyl-[acyl-carrier-protein]: step 2/2. In terms of biological role, catalyzes the radical-mediated insertion of two sulfur atoms into the C-6 and C-8 positions of the octanoyl moiety bound to the lipoyl domains of lipoate-dependent enzymes, thereby converting the octanoylated domains into lipoylated derivatives. The chain is Lipoyl synthase from Aeromonas salmonicida (strain A449).